The sequence spans 235 residues: Secreted RxLR effector protein 27 (235 aa).

The signal sequence occupies residues 1–25; that stretch reads MTNLFTRHTRRSLTALALLSGGVYA. Residues 36-60 carry the RxLR-dEER motif; that stretch reads RSLRVFVTGGQVLWDYRIHFKGIER.

This sequence belongs to the RxLR effector family.

It localises to the secreted. The protein localises to the host cytoplasm. It is found in the host nucleus. Functionally, effector that acts as a broad suppressor of cell death to interrupt plant immunity. Inhibits cell death induced by cell death-inducing proteins, including the PAMP elicitor INF1 from P.infestans. This Plasmopara viticola (Downy mildew of grapevine) protein is Secreted RxLR effector protein 27.